Consider the following 404-residue polypeptide: Cysteine desulfurase IscS (404 aa).

Residues 75 to 76, asparagine 155, glutamine 183, and 203 to 205 contribute to the pyridoxal 5'-phosphate site; these read AT and SAH. Position 206 is an N6-(pyridoxal phosphate)lysine (lysine 206). Threonine 243 contributes to the pyridoxal 5'-phosphate binding site. The Cysteine persulfide intermediate role is filled by cysteine 328. Cysteine 328 lines the [2Fe-2S] cluster pocket.

It belongs to the class-V pyridoxal-phosphate-dependent aminotransferase family. NifS/IscS subfamily. Homodimer. Forms a heterotetramer with IscU, interacts with other sulfur acceptors. Pyridoxal 5'-phosphate serves as cofactor.

The protein localises to the cytoplasm. It catalyses the reaction (sulfur carrier)-H + L-cysteine = (sulfur carrier)-SH + L-alanine. The protein operates within cofactor biosynthesis; iron-sulfur cluster biosynthesis. In terms of biological role, master enzyme that delivers sulfur to a number of partners involved in Fe-S cluster assembly, tRNA modification or cofactor biosynthesis. Catalyzes the removal of elemental sulfur atoms from cysteine to produce alanine. Functions as a sulfur delivery protein for Fe-S cluster synthesis onto IscU, an Fe-S scaffold assembly protein, as well as other S acceptor proteins. The chain is Cysteine desulfurase IscS from Vibrio atlanticus (strain LGP32) (Vibrio splendidus (strain Mel32)).